The primary structure comprises 252 residues: Urease accessory protein UreH (252 aa).

Belongs to the UreD family. In terms of assembly, ureH, UreF and UreG form a complex that acts as a GTP-hydrolysis-dependent molecular chaperone, activating the urease apoprotein by helping to assemble the nickel containing metallocenter of UreC. The UreE protein probably delivers the nickel.

The protein localises to the cytoplasm. In terms of biological role, required for maturation of urease via the functional incorporation of the urease nickel metallocenter. This Helicobacter hepaticus (strain ATCC 51449 / 3B1) protein is Urease accessory protein UreH.